The sequence spans 308 residues: Ribonuclease HIII (308 aa).

Residues 91-308 (KNVIGSDEVG…TEKALKMVKK (218 aa)) form the RNase H type-2 domain. Aspartate 97, glutamate 98, and aspartate 202 together coordinate a divalent metal cation.

The protein belongs to the RNase HII family. RnhC subfamily. Requires Mn(2+) as cofactor. Mg(2+) serves as cofactor.

It is found in the cytoplasm. The catalysed reaction is Endonucleolytic cleavage to 5'-phosphomonoester.. In terms of biological role, endonuclease that specifically degrades the RNA of RNA-DNA hybrids. The chain is Ribonuclease HIII from Listeria monocytogenes serotype 4b (strain F2365).